The primary structure comprises 288 residues: ATP synthase gamma chain (288 aa).

This sequence belongs to the ATPase gamma chain family. F-type ATPases have 2 components, CF(1) - the catalytic core - and CF(0) - the membrane proton channel. CF(1) has five subunits: alpha(3), beta(3), gamma(1), delta(1), epsilon(1). CF(0) has three main subunits: a, b and c.

It is found in the cell inner membrane. In terms of biological role, produces ATP from ADP in the presence of a proton gradient across the membrane. The gamma chain is believed to be important in regulating ATPase activity and the flow of protons through the CF(0) complex. This chain is ATP synthase gamma chain, found in Acidovorax ebreus (strain TPSY) (Diaphorobacter sp. (strain TPSY)).